An 80-amino-acid polypeptide reads, in one-letter code: MITKNYLIDKIHDKLNYLSKEDVKDSVDLILDYLNESLKQQKRIEIRNFGNFSIRKRKFPESEKFYNTVYYRMPKNLFKE.

The protein belongs to the bacterial histone-like protein family.

Its function is as follows. Histone-like DNA-binding protein which is capable of wrapping DNA to stabilize it, and thus to prevent its denaturation under extreme environmental conditions. This chain is DNA-binding protein HU-like, found in Rickettsia rickettsii (strain Sheila Smith).